A 55-amino-acid polypeptide reads, in one-letter code: Large ribosomal subunit protein bL33 (55 aa).

This sequence belongs to the bacterial ribosomal protein bL33 family.

This Bartonella bacilliformis (strain ATCC 35685 / KC583 / Herrer 020/F12,63) protein is Large ribosomal subunit protein bL33.